The sequence spans 213 residues: Gas vesicle protein F1 (213 aa).

Belongs to the gas vesicle GvpF/GvpL family. In terms of assembly, binds GvpA1 in early growth stages; is the only one of GvpF1 to GvpM1 that interacts with GvpA1 in H.volcanii experiments. GvpF to GvpM interact with each other in vitro, and may form multi-subunit complex(es). Interacts with GvpC1 and GvpO1.

The protein localises to the gas vesicle. It localises to the cytoplasm. Its function is as follows. Might be involved in preventing aggregation of GvpA1. Proteins GvpF to GvpM might be involved in nucleating gas vesicle formation. A minor component of the gas vesicle, also found in soluble extracts. Gas vesicles are hollow, gas filled proteinaceous nanostructures found in several microbial planktonic microorganisms. They allow positioning of halobacteria at the optimal depth for growth in the poorly aerated, shallow brine pools of their habitat. In terms of biological role, expression of a 9.5 kb p-vac DNA fragment containing 2 divergently transcribed regions (gvpD-gvpE-gvpF-gvpG-gvpH-gvpI-gvpJ-gvpK-gvpL-gvpM and gvpA-gvpC-gvpN-gvpO) allows H.volcanii to produce gas vesicles. A minimal gas vesicle can be made in H.volcanii by gvpA1-gvpO1 plus gvpF1-gvpG1-gvpJ1-gvpK1-gvpL1-gvpM1; lack of enough GvpJ1 prevents formation. The same region restores gas vesicle production in H.halobium without the p-vac locus. The polypeptide is Gas vesicle protein F1 (gvpF11) (Halobacterium salinarum (strain ATCC 700922 / JCM 11081 / NRC-1) (Halobacterium halobium)).